Consider the following 297-residue polypeptide: tRNA pseudouridine synthase B (297 aa).

Asp-44 (nucleophile) is an active-site residue.

Belongs to the pseudouridine synthase TruB family. Type 1 subfamily.

It catalyses the reaction uridine(55) in tRNA = pseudouridine(55) in tRNA. Functionally, responsible for synthesis of pseudouridine from uracil-55 in the psi GC loop of transfer RNAs. The protein is tRNA pseudouridine synthase B of Corynebacterium efficiens (strain DSM 44549 / YS-314 / AJ 12310 / JCM 11189 / NBRC 100395).